We begin with the raw amino-acid sequence, 491 residues long: Ran-binding protein 3-like (491 aa).

Residues 270 to 441 (TFKSVLKFPN…VALRSLAKQG (172 aa)) enclose the RanBD1 domain. The interval 440–468 (QGDGGPAESQSDTALPQLNGESCDEDEDE) is disordered. Polar residues predominate over residues 447-459 (ESQSDTALPQLNG).

As to quaternary structure, interacts with SMAD1, SMAD5 and SMAD8.

It is found in the nucleus. The protein resides in the cytoplasm. Nuclear export factor for BMP-specific SMAD1/5/8 that plays a critical role in terminating BMP signaling and regulating mesenchymal stem cell differentiation by blocking osteoblast differentiation to promote myogenic differention. Directly recognizes dephosphorylated SMAD1/5/8 and mediates their nuclear export in a Ran-dependent manner. In Mus musculus (Mouse), this protein is Ran-binding protein 3-like (Ranbp3l).